We begin with the raw amino-acid sequence, 92 residues long: Integration host factor subunit beta (92 aa).

The protein belongs to the bacterial histone-like protein family. In terms of assembly, heterodimer of an alpha and a beta chain.

Its function is as follows. This protein is one of the two subunits of integration host factor, a specific DNA-binding protein that functions in genetic recombination as well as in transcriptional and translational control. The protein is Integration host factor subunit beta of Bartonella tribocorum (strain CIP 105476 / IBS 506).